A 106-amino-acid polypeptide reads, in one-letter code: Envelope small membrane protein (106 aa).

At 1 to 11 the chain is on the virion surface side; the sequence is MMNLLNTSLEE. Residues 12 to 32 form a helical membrane-spanning segment; that stretch reads NGSFLTALYVICEFVALYLLG. At 33 to 106 the chain is on the intravirion side; that stretch reads RALQAFVQAA…ANFQNGKLHT (74 aa).

It belongs to the gammacoronaviruses E protein family. Homooligomer. Interacts with the M membrane protein in the budding compartment of the host cell, which is located between endoplasmic reticulum and the Golgi complex. The cytoplasmic tails of both proteins are important for this function. Interacts with Nucleoprotein.

It localises to the host Golgi apparatus membrane. Plays a central role in virus morphogenesis and assembly. Acts as a viroporin and self-assembles in host membranes forming pentameric protein-lipid pores that allow ion transport. Also plays a role in the induction of apoptosis. This is Envelope small membrane protein from Gallus gallus (Chicken).